The chain runs to 2147 residues: Probable serine/threonine-protein kinase roco6 (2147 aa).

The Extracellular segment spans residues 1 to 1055 (MNSIHKQHYT…LDHSRVEFNR (1055 aa)). LRR repeat units lie at residues 69 to 89 (DMKY…MMIP), 101 to 122 (SISI…LKQL), 124 to 145 (QLIS…FPEE), 148 to 169 (LLRK…FNKF), 171 to 192 (ILED…LFPE), 193 to 214 (GIMR…PWFE), 215 to 236 (SLLT…PFHL), 237 to 256 (VRVS…VILR), 306 to 328 (HLTH…ANLT), 329 to 350 (ELVR…IVSY), and 352 to 372 (RLEH…PRRI). The 361-residue stretch at 390-750 (QGEPSYRVKL…DLLKKTVVEL (361 aa)) folds into the Roc domain. The tract at residues 390–750 (QGEPSYRVKL…DLLKKTVVEL (361 aa)) is small GTPase-like. 403-410 (GQENVGKT) serves as a coordination point for GTP. Disordered stretches follow at residues 491-582 (NSNG…VGTN) and 602-621 (SNLS…GGSG). Composition is skewed to low complexity over residues 492-512 (SNGV…NIHS), 519-531 (NVNS…SNNS), 539-568 (NSFL…NVNS), and 602-617 (SNLS…NNNS). GTP contacts are provided by residues 634 to 638 (DCAGQ) and 691 to 694 (THLD). Positions 758–892 (PELYLKLEKL…RFELMFPLDS (135 aa)) constitute a COR domain. 2 stretches are compositionally biased toward low complexity: residues 905–941 (GNSY…SPST) and 960–977 (SGNN…RSIS). The disordered stretch occupies residues 905–995 (GNSYVNNNNN…NSDLDLIGGG (91 aa)). One copy of the WD 1 repeat lies at 1051–1098 (VEFNRWIQLSFAPAGLFSRLLIRLLISKEFDMKPILYWRNGVVVESQS). The chain crosses the membrane as a helical span at residues 1056 to 1076 (WIQLSFAPAGLFSRLLIRLLI). Topologically, residues 1077–2147 (SKEFDMKPIL…CGTNNVCIWS (1071 aa)) are cytoplasmic. 3 LRR repeats span residues 1237–1263 (ILSI…PPPP), 1274–1297 (DDNI…GSQP), and 1325–1348 (ESSL…TYKY). One can recognise a Protein kinase domain in the interval 1356–1627 (FESPKLIGRG…KIVKRIKQII (272 aa)). ATP contacts are provided by residues 1362 to 1370 (IGRGASGKI) and lysine 1383. The active-site Proton acceptor is aspartate 1481. The segment at 1653–1699 (ADSQPFHYHQQQQPSLNSTNQLQQQQYSSVLTSPRSNLSDSSNSSQN) is disordered. Residues 1662–1699 (QQQQPSLNSTNQLQQQQYSSVLTSPRSNLSDSSNSSQN) are compositionally biased toward low complexity. WD repeat units follow at residues 1735-1774 (QPEA…QIFR) and 1778-1820 (LHPG…LDDQ). Residues 1821–1923 (SGTKSDFITK…WLTAINRVIN (103 aa)) form the PH domain. Residues 2031-2068 (HYSKPITSMALVEKNVWISCEDESLSVWDGDTGSFIRK) form a WD 4 repeat.

This sequence belongs to the protein kinase superfamily. TKL Ser/Thr protein kinase family. ROCO subfamily.

It is found in the membrane. The catalysed reaction is L-seryl-[protein] + ATP = O-phospho-L-seryl-[protein] + ADP + H(+). It carries out the reaction L-threonyl-[protein] + ATP = O-phospho-L-threonyl-[protein] + ADP + H(+). Functionally, may act as a serine/threonine-protein kinase and guanine-nucleotide releasing factor. The chain is Probable serine/threonine-protein kinase roco6 (roco6) from Dictyostelium discoideum (Social amoeba).